The sequence spans 67 residues: Conotoxin Cl6.7 (67 aa).

The first 24 residues, methionine 1–threonine 24, serve as a signal peptide directing secretion. Positions threonine 25–serine 39 are excised as a propeptide. 3 cysteine pairs are disulfide-bonded: cysteine 43–cysteine 58, cysteine 50–cysteine 62, and cysteine 57–cysteine 66.

It belongs to the conotoxin O1 superfamily. As to expression, expressed by the venom duct.

Its subcellular location is the secreted. In Californiconus californicus (California cone), this protein is Conotoxin Cl6.7.